The following is a 217-amino-acid chain: Orotate phosphoribosyltransferase (217 aa).

Lysine 26 contacts 5-phospho-alpha-D-ribose 1-diphosphate. 34–35 contributes to the orotate binding site; the sequence is FF. 5-phospho-alpha-D-ribose 1-diphosphate is bound by residues 72-73, arginine 99, lysine 100, lysine 103, histidine 105, and 124-132; these read YK and DDVITAGTA. The orotate site is built by threonine 128 and arginine 156.

The protein belongs to the purine/pyrimidine phosphoribosyltransferase family. PyrE subfamily. In terms of assembly, homodimer. Mg(2+) is required as a cofactor.

It catalyses the reaction orotidine 5'-phosphate + diphosphate = orotate + 5-phospho-alpha-D-ribose 1-diphosphate. Its pathway is pyrimidine metabolism; UMP biosynthesis via de novo pathway; UMP from orotate: step 1/2. Its function is as follows. Catalyzes the transfer of a ribosyl phosphate group from 5-phosphoribose 1-diphosphate to orotate, leading to the formation of orotidine monophosphate (OMP). The protein is Orotate phosphoribosyltransferase of Aeromonas salmonicida (strain A449).